Reading from the N-terminus, the 692-residue chain is Elongation factor G (692 aa).

Residues 8-282 enclose the tr-type G domain; sequence ENTRNIGIMA…AVLDYLPSPL (275 aa). GTP-binding positions include 17-24, 81-85, and 135-138; these read AHIDAGKT, DTPGH, and NKMD.

Belongs to the TRAFAC class translation factor GTPase superfamily. Classic translation factor GTPase family. EF-G/EF-2 subfamily.

It is found in the cytoplasm. Functionally, catalyzes the GTP-dependent ribosomal translocation step during translation elongation. During this step, the ribosome changes from the pre-translocational (PRE) to the post-translocational (POST) state as the newly formed A-site-bound peptidyl-tRNA and P-site-bound deacylated tRNA move to the P and E sites, respectively. Catalyzes the coordinated movement of the two tRNA molecules, the mRNA and conformational changes in the ribosome. In Halalkalibacterium halodurans (strain ATCC BAA-125 / DSM 18197 / FERM 7344 / JCM 9153 / C-125) (Bacillus halodurans), this protein is Elongation factor G (fusA).